The following is a 262-amino-acid chain: Sulfur carrier protein FdhD (262 aa).

Catalysis depends on Cys107, which acts as the Cysteine persulfide intermediate.

This sequence belongs to the FdhD family.

The protein localises to the cytoplasm. Functionally, required for formate dehydrogenase (FDH) activity. Acts as a sulfur carrier protein that transfers sulfur from IscS to the molybdenum cofactor prior to its insertion into FDH. This Bacillus subtilis (strain 168) protein is Sulfur carrier protein FdhD.